The primary structure comprises 530 residues: Histone-arginine methyltransferase CARMER (530 aa).

Residues 141–450 (ASQYFQFYGY…QSYDVTIDLH (310 aa)) form the SAM-dependent MTase PRMT-type domain. Positions 154, 163, 187, 209, 238, and 266 each coordinate S-adenosyl-L-methionine. An Asymmetric dimethylarginine; by autocatalysis modification is found at arginine 501.

The protein belongs to the class I-like SAM-binding methyltransferase superfamily. Protein arginine N-methyltransferase family. In terms of assembly, homodimer. Post-translationally, the dimethylated protein is the major form.

It is found in the cytoplasm. Its subcellular location is the nucleus. It catalyses the reaction L-arginyl-[protein] + 2 S-adenosyl-L-methionine = N(omega),N(omega)-dimethyl-L-arginyl-[protein] + 2 S-adenosyl-L-homocysteine + 2 H(+). Its function is as follows. Methylates (mono- and asymmetric dimethylation) the guanidino nitrogens of arginyl residues in proteins. May methylate histone H3 at 'Arg-17' and activate transcription via chromatin remodeling. In Drosophila erecta (Fruit fly), this protein is Histone-arginine methyltransferase CARMER (Art4).